A 218-amino-acid polypeptide reads, in one-letter code: Glutathione S-transferase Mu 4 (218 aa).

The GST N-terminal domain occupies Ser-2–Gly-88. Glutathione-binding positions include Tyr-7–Trp-8, Trp-46–Lys-50, Asn-59–Leu-60, and Gln-72–Ser-73. The GST C-terminal domain maps to Thr-90–Leu-208. A substrate-binding site is contributed by Tyr-116.

Belongs to the GST superfamily. Mu family. In terms of assembly, homodimer. Expressed in a wide variety of tissues.

The protein resides in the cytoplasm. It catalyses the reaction RX + glutathione = an S-substituted glutathione + a halide anion + H(+). It carries out the reaction 1-chloro-2,4-dinitrobenzene + glutathione = 2,4-dinitrophenyl-S-glutathione + chloride + H(+). The catalysed reaction is (13S,14S)-epoxy-(4Z,7Z,9E,11E,16Z,19Z)-docosahexaenoate + glutathione = (13R)-S-glutathionyl-(14S)-hydroxy-(4Z,7Z,9E,11E,16Z,19Z)-docosahexaenoate. The enzyme catalyses leukotriene C4 = leukotriene A4 + glutathione. Functionally, conjugation of reduced glutathione to a wide number of exogenous and endogenous hydrophobic electrophiles. Catalyzes the conjugation of leukotriene A4 with reduced glutathione (GSH) to form leukotriene C4. Can also catalyze the transfer of a glutathionyl group from glutathione (GSH) to 13(S),14(S)-epoxy-docosahexaenoic acid to form maresin conjugate in tissue regeneration 1 (MCTR1), a bioactive lipid mediator that possess potent anti-inflammatory and proresolving actions. The chain is Glutathione S-transferase Mu 4 (GSTM4) from Homo sapiens (Human).